A 150-amino-acid polypeptide reads, in one-letter code: Propanediol utilization protein PduV (150 aa).

The interval 1 to 42 (MKRIMLIGPSQCGKTSLTQCMRGEALHYQKTQAIVWSPTTID) is targets protein to the BMC. 8 to 15 (GPSQCGKT) contributes to the GTP binding site.

Belongs to the EutP/PduV family. In terms of assembly, interacts with PduU, probably via the PduU beta-barrel which is predicted by modeling to be on the exterior of the BMC.

The protein localises to the bacterial microcompartment. It participates in polyol metabolism; 1,2-propanediol degradation. In terms of biological role, may play a role in the spatial distribution of the bacterial microcompartment (BMC) dedicated to 1,2-PD degradation, perhaps being involved in cytoskeleton dynamics; might bind GTP. This subunit is directly targeted to the BMC. Expression of a cosmid containing the full 21-gene pdu operon in E.coli allows E.coli to grow on 1,2-propanediol (1,2-PD) with the appearance of bacterial microcompartments (BMC) in its cytoplasm. Functionally, the 1,2-PD-specific bacterial microcompartment (BMC) concentrates low levels of 1,2-PD catabolic enzymes, concentrates volatile reaction intermediates thus enhancing pathway flux and keeps the level of toxic, mutagenic propionaldehyde low. The chain is Propanediol utilization protein PduV from Citrobacter freundii.